A 436-amino-acid polypeptide reads, in one-letter code: Serine--tRNA ligase (436 aa).

Residue 242–244 (TAE) participates in L-serine binding. ATP is bound at residue 273–275 (RSE). Glu-296 is a binding site for L-serine. 360-363 (EISS) is a binding site for ATP. L-serine is bound at residue Ser-395.

The protein belongs to the class-II aminoacyl-tRNA synthetase family. Type-1 seryl-tRNA synthetase subfamily. Homodimer. The tRNA molecule binds across the dimer.

The protein localises to the cytoplasm. The catalysed reaction is tRNA(Ser) + L-serine + ATP = L-seryl-tRNA(Ser) + AMP + diphosphate + H(+). It catalyses the reaction tRNA(Sec) + L-serine + ATP = L-seryl-tRNA(Sec) + AMP + diphosphate + H(+). Its pathway is aminoacyl-tRNA biosynthesis; selenocysteinyl-tRNA(Sec) biosynthesis; L-seryl-tRNA(Sec) from L-serine and tRNA(Sec): step 1/1. Catalyzes the attachment of serine to tRNA(Ser). Is also able to aminoacylate tRNA(Sec) with serine, to form the misacylated tRNA L-seryl-tRNA(Sec), which will be further converted into selenocysteinyl-tRNA(Sec). This Polynucleobacter asymbioticus (strain DSM 18221 / CIP 109841 / QLW-P1DMWA-1) (Polynucleobacter necessarius subsp. asymbioticus) protein is Serine--tRNA ligase.